A 1420-amino-acid chain; its full sequence is Mediator of RNA polymerase II transcription subunit 13 (1420 aa).

Phosphoserine occurs at positions 370, 375, and 425. The span at 416 to 427 (TTVSNDLENSPL) shows a compositional bias: polar residues. The segment at 416–511 (TTVSNDLENS…TNESNKSISD (96 aa)) is disordered. Residues 429–439 (TELEANGRSLE) show a composition bias toward basic and acidic residues. Polar residues predominate over residues 440–453 (KVNNSVSKTGSVDT). The span at 454–484 (LHNKEGTLEQREQNENLPSDKSDSMVDKELF) shows a compositional bias: basic and acidic residues. Positions 494-508 (GDSNKSNSTNESNKS) are enriched in low complexity. Residue Thr601 is modified to Phosphothreonine. Ser608 is modified (phosphoserine; by PKA). Phosphoserine is present on Ser636. The tract at residues 653-691 (LSSSEEEEDEEENGSSDEDLKSLNVRDDMKPSDNISTNT) is disordered. Acidic residues predominate over residues 655–669 (SSEEEEDEEENGSSD). The span at 670-683 (EDLKSLNVRDDMKP) shows a compositional bias: basic and acidic residues. A Phosphoserine modification is found at Ser748.

The protein belongs to the Mediator complex subunit 13 family. Component of the SRB8-11 complex which consists of SRB8, SSN2/SRB9, SSN3/SRB10 and SSN8/SRB11. The SRB8-11 complex associates with the Mediator complex. The SSN3/SRB10 and SSN8/SRB11 kinase-cyclin pair also associate with the RNA polymerase II holoenzyme. Phosphorylated. PKA-dependent phosphorylation at 'Ser-608' is enhanced by activation of the RAS signaling pathway.

It localises to the nucleus. Functionally, component of the SRB8-11 complex. The SRB8-11 complex is a regulatory module of the Mediator complex which is itself involved in regulation of basal and activated RNA polymerase II-dependent transcription. The SRB8-11 complex may be involved in the transcriptional repression of a subset of genes regulated by Mediator. It may inhibit the association of the Mediator complex with RNA polymerase II to form the holoenzyme complex. The SRB8-11 complex phosphorylates the C-terminal domain (CTD) of the largest subunit of RNA polymerase II RPB1 at serines 2 and 5. This Saccharomyces cerevisiae (strain ATCC 204508 / S288c) (Baker's yeast) protein is Mediator of RNA polymerase II transcription subunit 13 (SSN2).